The following is a 235-amino-acid chain: Small ribosomal subunit protein eS4 (235 aa).

The S4 RNA-binding domain occupies 38-101 (IPLLVLVRDF…EKSYRILFDE (64 aa)).

Belongs to the eukaryotic ribosomal protein eS4 family.

This is Small ribosomal subunit protein eS4 (rps4e) from Archaeoglobus fulgidus (strain ATCC 49558 / DSM 4304 / JCM 9628 / NBRC 100126 / VC-16).